The chain runs to 616 residues: Chaperone protein HscA (616 aa).

This sequence belongs to the heat shock protein 70 family.

Functionally, chaperone involved in the maturation of iron-sulfur cluster-containing proteins. Has a low intrinsic ATPase activity which is markedly stimulated by HscB. Involved in the maturation of IscU. This chain is Chaperone protein HscA, found in Photorhabdus laumondii subsp. laumondii (strain DSM 15139 / CIP 105565 / TT01) (Photorhabdus luminescens subsp. laumondii).